Consider the following 316-residue polypeptide: HPr kinase/phosphorylase (316 aa).

Active-site residues include His-141 and Lys-162. 156–163 (GESGVGKS) provides a ligand contact to ATP. Ser-163 contributes to the Mg(2+) binding site. Asp-180 serves as the catalytic Proton acceptor; for phosphorylation activity. Proton donor; for dephosphorylation activity. Residues 204-213 (MEIRGIGIID) form an important for the catalytic mechanism of both phosphorylation and dephosphorylation region. Glu-205 serves as a coordination point for Mg(2+). Residue Arg-246 is part of the active site. Residues 267 to 272 (PVKVGR) form an important for the catalytic mechanism of dephosphorylation region.

The protein belongs to the HPrK/P family. As to quaternary structure, homohexamer. The cofactor is Mg(2+).

The enzyme catalyses [HPr protein]-L-serine + ATP = [HPr protein]-O-phospho-L-serine + ADP + H(+). It catalyses the reaction [HPr protein]-O-phospho-L-serine + phosphate + H(+) = [HPr protein]-L-serine + diphosphate. In terms of biological role, catalyzes the ATP- as well as the pyrophosphate-dependent phosphorylation of a specific serine residue in HPr, a phosphocarrier protein of the phosphoenolpyruvate-dependent sugar phosphotransferase system (PTS). HprK/P also catalyzes the pyrophosphate-producing, inorganic phosphate-dependent dephosphorylation (phosphorolysis) of seryl-phosphorylated HPr (P-Ser-HPr). The two antagonistic activities of HprK/P are regulated by several intracellular metabolites, which change their concentration in response to the absence or presence of rapidly metabolisable carbon sources (glucose, fructose, etc.) in the growth medium. Therefore, by controlling the phosphorylation state of HPr, HPrK/P is a sensor enzyme that plays a major role in the regulation of carbon metabolism and sugar transport: it mediates carbon catabolite repression (CCR), and regulates PTS-catalyzed carbohydrate uptake and inducer exclusion. The sequence is that of HPr kinase/phosphorylase from Lactobacillus delbrueckii subsp. bulgaricus (strain ATCC 11842 / DSM 20081 / BCRC 10696 / JCM 1002 / NBRC 13953 / NCIMB 11778 / NCTC 12712 / WDCM 00102 / Lb 14).